The chain runs to 201 residues: 3-isopropylmalate dehydratase small subunit (201 aa).

The protein belongs to the LeuD family. LeuD type 1 subfamily. As to quaternary structure, heterodimer of LeuC and LeuD.

The enzyme catalyses (2R,3S)-3-isopropylmalate = (2S)-2-isopropylmalate. It functions in the pathway amino-acid biosynthesis; L-leucine biosynthesis; L-leucine from 3-methyl-2-oxobutanoate: step 2/4. Functionally, catalyzes the isomerization between 2-isopropylmalate and 3-isopropylmalate, via the formation of 2-isopropylmaleate. This Chloroflexus aurantiacus (strain ATCC 29366 / DSM 635 / J-10-fl) protein is 3-isopropylmalate dehydratase small subunit.